Here is a 276-residue protein sequence, read N- to C-terminus: MAASGEEDMSELSPAAAPNLDWYEKPEETHAPEVDLETVIPPAQEPSNPAEPFCPRDLVPVVFPGPVSQEDCCQFTCELLKHILYQRHQLPLPYEQLKHFYRKVPQAEDTARKKAWLATEARNRKCQQALAELESVLSHLRDFFARTLVPQVLILLGGNALSPKEFYELDLSRLAPFGVDQGLNTAACLRRLFRAIFLADPFSELQTPPLMGTIVMVQGHRDCGEDWFQPKLNYRVPSRGHKLTVTLSCGRPSVPAMASEDYIWFQAPVTLKGFHE.

Over residues 1 to 10 (MAASGEEDMS) the composition is skewed to acidic residues. The disordered stretch occupies residues 1 to 30 (MAASGEEDMSELSPAAAPNLDWYEKPEETH). The segment at 49-81 (PAEPFCPRDLVPVVFPGPVSQEDCCQFTCELLK) is interaction with MAD2L1.

This sequence belongs to the MAD2L1BP family. Interacts with MAD2L1.

Its subcellular location is the nucleus. The protein localises to the nucleoplasm. It localises to the cytoplasm. The protein resides in the cytoskeleton. It is found in the spindle. May function to silence the spindle checkpoint and allow mitosis to proceed through anaphase by binding MAD2L1 after it has become dissociated from the MAD2L1-CDC20 complex. This Mus musculus (Mouse) protein is MAD2L1-binding protein (Mad2l1bp).